A 140-amino-acid chain; its full sequence is MEIDYYDYEKLLEKAYQELPENVKHHKSRFEVPGALVTIEGNKTIIENFKDIADALNRDPQHLLKFLLREIATAGTLEGRRVVLQGRFTPYLIANKLKKYIKEYVICPVCGSPDTKIIKRDRFHFLKCEACGAETPIQHL.

This sequence belongs to the eIF-2-beta/eIF-5 family. In terms of assembly, heterotrimer composed of an alpha, a beta and a gamma chain.

Functionally, eIF-2 functions in the early steps of protein synthesis by forming a ternary complex with GTP and initiator tRNA. This Pyrococcus furiosus (strain ATCC 43587 / DSM 3638 / JCM 8422 / Vc1) protein is Translation initiation factor 2 subunit beta.